The following is a 320-amino-acid chain: MIKKIGVLTSGGDAPGMNAAIRGVVRAALSEGLEVMGIYDGYLGLYEDRMVQLDRYSVSDMINRGGTFLGSARFPEFRDENIRAVAIENLKKRGIDALVVIGGDGSYMGAMRLTEMGFPCIGLPGTIDNDIKGTDYTIGFFTALSTVVEAIDRLRDTSSSHQRISVVEVMGRYCGDLTLAAAIAGGCEFVVVPEVEFSREDLVNEIKAGIAKGKKHAIVAITEHMCDVDELAHFIEKETGRETRATVLGHIQRGGSPVPYDRILASRMGAYAIELLLAGYGGRCVGIQNEQLVHHDIIDAIENMKRPFKGDWLECAKKLY.

G12 is a binding site for ATP. ADP contacts are provided by residues 22–26 (RGVVR) and 55–60 (RYSVSD). ATP contacts are provided by residues 73 to 74 (RF) and 103 to 106 (GDGS). A Mg(2+)-binding site is contributed by D104. Position 126–128 (126–128 (TID)) interacts with substrate. D128 acts as the Proton acceptor in catalysis. Residue R155 coordinates ADP. Substrate-binding positions include R163 and 170-172 (MGR). ADP is bound by residues 186-188 (GCE), K212, and 214-216 (KKH). Substrate-binding positions include E223, R244, and 250–253 (HIQR).

This sequence belongs to the phosphofructokinase type A (PFKA) family. ATP-dependent PFK group I subfamily. Prokaryotic clade 'B1' sub-subfamily. Homotetramer. It depends on Mg(2+) as a cofactor.

It is found in the cytoplasm. The enzyme catalyses beta-D-fructose 6-phosphate + ATP = beta-D-fructose 1,6-bisphosphate + ADP + H(+). It participates in carbohydrate degradation; glycolysis; D-glyceraldehyde 3-phosphate and glycerone phosphate from D-glucose: step 3/4. Allosterically activated by ADP and other diphosphonucleosides, and allosterically inhibited by phosphoenolpyruvate. In terms of biological role, catalyzes the phosphorylation of D-fructose 6-phosphate to fructose 1,6-bisphosphate by ATP, the first committing step of glycolysis. This chain is ATP-dependent 6-phosphofructokinase, found in Escherichia fergusonii (strain ATCC 35469 / DSM 13698 / CCUG 18766 / IAM 14443 / JCM 21226 / LMG 7866 / NBRC 102419 / NCTC 12128 / CDC 0568-73).